Consider the following 668-residue polypeptide: Transketolase 2 (668 aa).

His-26 is a binding site for substrate. Thiamine diphosphate contacts are provided by residues His-66 and 114-116; that span reads GPL. Asp-155 serves as a coordination point for Mg(2+). Gly-156 and Asn-185 together coordinate thiamine diphosphate. The Mg(2+) site is built by Asn-185 and Ile-187. Residues His-261, Arg-358, and Ser-385 each coordinate substrate. Residue His-261 coordinates thiamine diphosphate. Catalysis depends on Glu-413, which acts as the Proton donor. Phe-439 contributes to the thiamine diphosphate binding site. Substrate-binding residues include His-463, Asp-471, and Arg-522.

The protein belongs to the transketolase family. As to quaternary structure, homodimer. It depends on Mg(2+) as a cofactor. Ca(2+) is required as a cofactor. The cofactor is Mn(2+). Requires Co(2+) as cofactor. Thiamine diphosphate serves as cofactor.

The catalysed reaction is D-sedoheptulose 7-phosphate + D-glyceraldehyde 3-phosphate = aldehydo-D-ribose 5-phosphate + D-xylulose 5-phosphate. Functionally, catalyzes the transfer of a two-carbon ketol group from a ketose donor to an aldose acceptor, via a covalent intermediate with the cofactor thiamine pyrophosphate. The sequence is that of Transketolase 2 (tktB) from Pasteurella multocida (strain Pm70).